Reading from the N-terminus, the 423-residue chain is Tyrosine--tRNA ligase (423 aa).

Tyrosine 35 serves as a coordination point for L-tyrosine. The short motif at 40–49 (PTAASLHVGH) is the 'HIGH' region element. Tyrosine 170 and glutamine 174 together coordinate L-tyrosine. The 'KMSKS' region motif lies at 231–235 (KFGKS). An ATP-binding site is contributed by lysine 234. Positions 353–419 (GPLVDLLVEV…GKKNLAAVEV (67 aa)) constitute an S4 RNA-binding domain.

Belongs to the class-I aminoacyl-tRNA synthetase family. TyrS type 1 subfamily. As to quaternary structure, homodimer.

Its subcellular location is the cytoplasm. The enzyme catalyses tRNA(Tyr) + L-tyrosine + ATP = L-tyrosyl-tRNA(Tyr) + AMP + diphosphate + H(+). In terms of biological role, catalyzes the attachment of tyrosine to tRNA(Tyr) in a two-step reaction: tyrosine is first activated by ATP to form Tyr-AMP and then transferred to the acceptor end of tRNA(Tyr). In Streptomyces griseus subsp. griseus (strain JCM 4626 / CBS 651.72 / NBRC 13350 / KCC S-0626 / ISP 5235), this protein is Tyrosine--tRNA ligase.